The following is a 150-amino-acid chain: Ribonuclease HI (150 aa).

An RNase H type-1 domain is found at 1-141 (MKSINAYTDG…VDVLARGQAM (141 aa)). Mg(2+) is bound by residues aspartate 9, glutamate 47, aspartate 69, and aspartate 133.

This sequence belongs to the RNase H family. As to quaternary structure, monomer. Requires Mg(2+) as cofactor.

Its subcellular location is the cytoplasm. The enzyme catalyses Endonucleolytic cleavage to 5'-phosphomonoester.. Functionally, endonuclease that specifically degrades the RNA of RNA-DNA hybrids. The chain is Ribonuclease HI from Xylella fastidiosa (strain 9a5c).